The sequence spans 425 residues: Serine--tRNA ligase (425 aa).

An L-serine-binding site is contributed by 230–232; the sequence is TAE. 261 to 263 contacts ATP; that stretch reads RSE. E284 serves as a coordination point for L-serine. 348 to 351 is an ATP binding site; that stretch reads EISS. S384 contributes to the L-serine binding site.

The protein belongs to the class-II aminoacyl-tRNA synthetase family. Type-1 seryl-tRNA synthetase subfamily. In terms of assembly, homodimer. The tRNA molecule binds across the dimer.

It is found in the cytoplasm. It carries out the reaction tRNA(Ser) + L-serine + ATP = L-seryl-tRNA(Ser) + AMP + diphosphate + H(+). The catalysed reaction is tRNA(Sec) + L-serine + ATP = L-seryl-tRNA(Sec) + AMP + diphosphate + H(+). The protein operates within aminoacyl-tRNA biosynthesis; selenocysteinyl-tRNA(Sec) biosynthesis; L-seryl-tRNA(Sec) from L-serine and tRNA(Sec): step 1/1. Catalyzes the attachment of serine to tRNA(Ser). Is also able to aminoacylate tRNA(Sec) with serine, to form the misacylated tRNA L-seryl-tRNA(Sec), which will be further converted into selenocysteinyl-tRNA(Sec). The sequence is that of Serine--tRNA ligase from Maridesulfovibrio salexigens (strain ATCC 14822 / DSM 2638 / NCIMB 8403 / VKM B-1763) (Desulfovibrio salexigens).